The chain runs to 972 residues: UvrABC system protein A (972 aa).

32-39 (GLSGSGKS) contacts ATP. The C4-type; atypical zinc finger occupies 257 to 285 (CPNGHALAVDDLEPRSFSFNSPYGACPEC). ABC transporter domains follow at residues 315 to 601 (WSNG…KDSI) and 621 to 950 (VDPR…KFLA). 654–661 (GVSGSGKS) contributes to the ATP binding site. The C4-type zinc finger occupies 753–779 (CEACTGDGTIKIEMNFLPDVYVPCEVC).

It belongs to the ABC transporter superfamily. UvrA family. In terms of assembly, forms a heterotetramer with UvrB during the search for lesions.

It localises to the cytoplasm. In terms of biological role, the UvrABC repair system catalyzes the recognition and processing of DNA lesions. UvrA is an ATPase and a DNA-binding protein. A damage recognition complex composed of 2 UvrA and 2 UvrB subunits scans DNA for abnormalities. When the presence of a lesion has been verified by UvrB, the UvrA molecules dissociate. This is UvrABC system protein A from Mycobacterium bovis (strain ATCC BAA-935 / AF2122/97).